Here is a 992-residue protein sequence, read N- to C-terminus: UPF0182 protein RHA1_ro06389 (992 aa).

The next 7 membrane-spanning stretches (helical) occupy residues 18–38 (VLLV…RLIS), 63–83 (LLLF…ALLL), 114–134 (LFGL…AQSS), 174–194 (WLFV…YIFG), 211–231 (VQLA…YWFD), 260–280 (KLIL…AIFL), and 288–308 (MATA…PLVV). A disordered region spans residues 904–948 (TGSVATAPSAEEGTPPETGTTPPVDQGAAPAPTAPATPPSGTDVS). Residues 908-934 (ATAPSAEEGTPPETGTTPPVDQGAAPA) show a composition bias toward low complexity.

Belongs to the UPF0182 family.

The protein resides in the cell membrane. The chain is UPF0182 protein RHA1_ro06389 from Rhodococcus jostii (strain RHA1).